The primary structure comprises 591 residues: Probable indole-3-acetic acid-amido synthetase GH3.11 (591 aa).

This sequence belongs to the IAA-amido conjugating enzyme family. In terms of tissue distribution, expressed in etiolated and green seedlings, roots, callus and highly in flowers.

In terms of biological role, may catalyze the synthesis of indole-3-acetic acid (IAA)-amino acid conjugates, providing a mechanism for the plant to cope with the presence of excess auxin. In Oryza sativa subsp. japonica (Rice), this protein is Probable indole-3-acetic acid-amido synthetase GH3.11 (GH3.11).